Here is a 358-residue protein sequence, read N- to C-terminus: MISREEAINFLNSTSSKDILDKLAQINNTFKREYITYSKNVFIPLSKWCRNKCGYCIFREDKPSLMKPNEVKEILLKGDRLGCREALFTFGEHVDENKEIKEQLKSMGYDNILEYLYDLEEWTLNNTSLLPHTNCGILNYDELKMLKDVNASMGLMLENASERLMNTIAHKHSPGKHPKLRIEMIENAGKLKIPFTTGLLIGIGETNEEIVDSLFKIKEIHEKYGHIQEVIIQNFRAKKGIPMENFKEPSPIKMLKVIILAKLILDDISIQIPPNLNRETGQLFLLAGVDDWGGVSPLTRDYVNPEAEWPEIKELREWTEELGLKLKMRLPVYDKYISEEWLSEKVYNKIIEMGWLKE.

The 241-residue stretch at 35 to 275 (ITYSKNVFIP…DDISIQIPPN (241 aa)) folds into the Radical SAM core domain. [4Fe-4S] cluster-binding residues include C49, C53, and C56.

Belongs to the radical SAM superfamily. CofG family. In terms of assembly, consists of two subunits, CofG and CofH. Requires [4Fe-4S] cluster as cofactor.

The enzyme catalyses 5-amino-5-(4-hydroxybenzyl)-6-(D-ribitylimino)-5,6-dihydrouracil + S-adenosyl-L-methionine = 7,8-didemethyl-8-hydroxy-5-deazariboflavin + 5'-deoxyadenosine + L-methionine + NH4(+) + H(+). Its pathway is cofactor biosynthesis; coenzyme F0 biosynthesis. Functionally, catalyzes the radical-mediated synthesis of 7,8-didemethyl-8-hydroxy-5-deazariboflavin (FO) from 5-amino-5-(4-hydroxybenzyl)-6-(D-ribitylimino)-5,6-dihydrouracil. The polypeptide is 7,8-didemethyl-8-hydroxy-5-deazariboflavin synthase (cofG) (Methanocaldococcus jannaschii (strain ATCC 43067 / DSM 2661 / JAL-1 / JCM 10045 / NBRC 100440) (Methanococcus jannaschii)).